The chain runs to 62 residues: Large ribosomal subunit protein eL24 (62 aa).

Zn(2+)-binding residues include Cys-6, Cys-9, Cys-32, and Cys-36. The C4-type zinc-finger motif lies at 6 to 36 (CYFCGKMLEPGTGKLYVKKDGSTYFMCSSKC).

Belongs to the eukaryotic ribosomal protein eL24 family. As to quaternary structure, part of the 50S ribosomal subunit. Forms a cluster with proteins L3 and L14. Zn(2+) serves as cofactor.

Its function is as follows. Binds to the 23S rRNA. The sequence is that of Large ribosomal subunit protein eL24 from Methanosarcina acetivorans (strain ATCC 35395 / DSM 2834 / JCM 12185 / C2A).